Reading from the N-terminus, the 475-residue chain is Aspartyl/glutamyl-tRNA(Asn/Gln) amidotransferase subunit B (475 aa).

It belongs to the GatB/GatE family. GatB subfamily. In terms of assembly, heterotrimer of A, B and C subunits.

It catalyses the reaction L-glutamyl-tRNA(Gln) + L-glutamine + ATP + H2O = L-glutaminyl-tRNA(Gln) + L-glutamate + ADP + phosphate + H(+). The catalysed reaction is L-aspartyl-tRNA(Asn) + L-glutamine + ATP + H2O = L-asparaginyl-tRNA(Asn) + L-glutamate + ADP + phosphate + 2 H(+). Functionally, allows the formation of correctly charged Asn-tRNA(Asn) or Gln-tRNA(Gln) through the transamidation of misacylated Asp-tRNA(Asn) or Glu-tRNA(Gln) in organisms which lack either or both of asparaginyl-tRNA or glutaminyl-tRNA synthetases. The reaction takes place in the presence of glutamine and ATP through an activated phospho-Asp-tRNA(Asn) or phospho-Glu-tRNA(Gln). This is Aspartyl/glutamyl-tRNA(Asn/Gln) amidotransferase subunit B from Staphylococcus saprophyticus subsp. saprophyticus (strain ATCC 15305 / DSM 20229 / NCIMB 8711 / NCTC 7292 / S-41).